Consider the following 298-residue polypeptide: Inosose dehydratase (298 aa).

It belongs to the IolE/MocC family. Glutathione serves as cofactor. Requires Co(2+) as cofactor. It depends on Mn(2+) as a cofactor.

The enzyme catalyses scyllo-inosose = 3D-3,5/4-trihydroxycyclohexane-1,2-dione + H2O. In terms of biological role, catalyzes the dehydration of inosose (2-keto-myo-inositol, 2KMI or 2,4,6/3,5-pentahydroxycyclohexanone) to 3D-(3,5/4)-trihydroxycyclohexane-1,2-dione (D-2,3-diketo-4-deoxy-epi-inositol). In Serratia proteamaculans (strain 568), this protein is Inosose dehydratase.